The primary structure comprises 197 residues: Large ribosomal subunit protein uL11 (197 aa).

Belongs to the universal ribosomal protein uL11 family. Part of the ribosomal stalk of the 50S ribosomal subunit. Interacts with L10 and the large rRNA to form the base of the stalk. L10 forms an elongated spine to which L12 dimers bind in a sequential fashion forming a multimeric L10(L12)X complex. In terms of processing, one or more lysine residues are methylated.

Its function is as follows. Forms part of the ribosomal stalk which helps the ribosome interact with GTP-bound translation factors. This chain is Large ribosomal subunit protein uL11, found in Mycoplasmopsis pulmonis (strain UAB CTIP) (Mycoplasma pulmonis).